We begin with the raw amino-acid sequence, 86 residues long: HssA/B-like protein 60 (86 aa).

The segment at 11-33 is disordered; sequence GNIKSSSKSNIASSSSSSSSQSL.

It belongs to the hssA/B family.

This is HssA/B-like protein 60 (hssl60) from Dictyostelium discoideum (Social amoeba).